The following is a 227-amino-acid chain: RNA-free ribonuclease P (227 aa).

This sequence belongs to the HARP family.

It catalyses the reaction Endonucleolytic cleavage of RNA, removing 5'-extranucleotides from tRNA precursor.. Functionally, RNA-free RNase P that catalyzes the removal of the 5'-leader sequence from pre-tRNA to produce the mature 5'-terminus. The chain is RNA-free ribonuclease P from Archaeoglobus fulgidus (strain ATCC 49558 / DSM 4304 / JCM 9628 / NBRC 100126 / VC-16).